A 394-amino-acid chain; its full sequence is Elongation factor Tu (394 aa).

The region spanning 10–204 (KPHVNVGTIG…ALDTYIPEPE (195 aa)) is the tr-type G domain. Positions 19 to 26 (GHVDHGKT) are G1. 19-26 (GHVDHGKT) contributes to the GTP binding site. Residue Thr-26 participates in Mg(2+) binding. Residues 60–64 (GITIA) are G2. The tract at residues 81-84 (DCPG) is G3. Residues 81–85 (DCPGH) and 136–139 (NKCD) contribute to the GTP site. Residues 136–139 (NKCD) are G4. Residues 174-176 (SAL) are G5.

This sequence belongs to the TRAFAC class translation factor GTPase superfamily. Classic translation factor GTPase family. EF-Tu/EF-1A subfamily. Monomer.

The protein resides in the cytoplasm. The catalysed reaction is GTP + H2O = GDP + phosphate + H(+). GTP hydrolase that promotes the GTP-dependent binding of aminoacyl-tRNA to the A-site of ribosomes during protein biosynthesis. This Vibrio parahaemolyticus serotype O3:K6 (strain RIMD 2210633) protein is Elongation factor Tu.